Here is a 169-residue protein sequence, read N- to C-terminus: uncharacterized protein (169 aa).

This is an uncharacterized protein from Haemophilus influenzae (strain ATCC 51907 / DSM 11121 / KW20 / Rd).